The primary structure comprises 231 residues: Large ribosomal subunit protein uL1 (231 aa).

Belongs to the universal ribosomal protein uL1 family. As to quaternary structure, part of the 50S ribosomal subunit.

Its function is as follows. Binds directly to 23S rRNA. The L1 stalk is quite mobile in the ribosome, and is involved in E site tRNA release. In terms of biological role, protein L1 is also a translational repressor protein, it controls the translation of the L11 operon by binding to its mRNA. The sequence is that of Large ribosomal subunit protein uL1 from Beijerinckia indica subsp. indica (strain ATCC 9039 / DSM 1715 / NCIMB 8712).